A 375-amino-acid chain; its full sequence is 23S rRNA (uracil(747)-C(5))-methyltransferase RlmC (375 aa).

Residues C3, C11, C14, and C87 each coordinate [4Fe-4S] cluster. The S-adenosyl-L-methionine site is built by Q212, F241, E262, and N307. C334 (nucleophile) is an active-site residue.

It belongs to the class I-like SAM-binding methyltransferase superfamily. RNA M5U methyltransferase family. RlmC subfamily.

The catalysed reaction is uridine(747) in 23S rRNA + S-adenosyl-L-methionine = 5-methyluridine(747) in 23S rRNA + S-adenosyl-L-homocysteine + H(+). Catalyzes the formation of 5-methyl-uridine at position 747 (m5U747) in 23S rRNA. This is 23S rRNA (uracil(747)-C(5))-methyltransferase RlmC from Pectobacterium atrosepticum (strain SCRI 1043 / ATCC BAA-672) (Erwinia carotovora subsp. atroseptica).